The following is a 111-amino-acid chain: MKRRSVCVGDTVYVLAGNDKGKQGKVLRCLKDKVVVEGINVRVKNIKRSQENPKGKRINIEAPLHISNVRLSIDNQPARLFVKVREKGRELWNKHSDGSSSLYRSVRERKG.

Belongs to the universal ribosomal protein uL24 family. As to quaternary structure, part of the 50S ribosomal subunit.

Functionally, one of two assembly initiator proteins, it binds directly to the 5'-end of the 23S rRNA, where it nucleates assembly of the 50S subunit. One of the proteins that surrounds the polypeptide exit tunnel on the outside of the subunit. In Chlamydia trachomatis serovar A (strain ATCC VR-571B / DSM 19440 / HAR-13), this protein is Large ribosomal subunit protein uL24.